Here is a 141-residue protein sequence, read N- to C-terminus: Nucleoside diphosphate kinase (141 aa).

The ATP site is built by lysine 11, phenylalanine 59, arginine 87, threonine 93, arginine 104, and asparagine 114. The Pros-phosphohistidine intermediate role is filled by histidine 117.

This sequence belongs to the NDK family. In terms of assembly, homotetramer. Mg(2+) is required as a cofactor.

It localises to the cytoplasm. It catalyses the reaction a 2'-deoxyribonucleoside 5'-diphosphate + ATP = a 2'-deoxyribonucleoside 5'-triphosphate + ADP. The enzyme catalyses a ribonucleoside 5'-diphosphate + ATP = a ribonucleoside 5'-triphosphate + ADP. Major role in the synthesis of nucleoside triphosphates other than ATP. The ATP gamma phosphate is transferred to the NDP beta phosphate via a ping-pong mechanism, using a phosphorylated active-site intermediate. In Halorhodospira halophila (strain DSM 244 / SL1) (Ectothiorhodospira halophila (strain DSM 244 / SL1)), this protein is Nucleoside diphosphate kinase.